A 452-amino-acid chain; its full sequence is MNLMQFSGLLVVWLLSTLFIATLTWFEFRRVRFNFNVFFSLLFLLTFFFGFPLTSVLVFRFDVGVAPPEILLQALLSAACFYGVYYVTYKTRLRKRVVDVTRKPLFTMNRVETHLTWVILMGIALVSVGIFFMHNGFLLFRLHSYSQIFSSEVSGVALKRFFYFFIPAMLVVYFLRQDSKAWLFFLVSTVAFGLLTYMIVGGTRANIIIAFAIFLFIGIIRGWISLWMLAAAGVLGIVGMFWLALKRYGLNVSGDEAFYTFLYLTRDTFSPWENLALLLQNYHNIDFQGLAPIVRDFYVFIPTWLWPGRPSIVLNSANYFTWEVLNNHSGLAISPTLIGSLVVMGGALFIPLGAIVVGLIIKWFDWLYELGNREPNRYKAAILHSFCFGAIFNMIVLAREGLDSFVSRVVFFLVVFGASLLVAKLLFWLFDSAGLIHKRTTSLPQAQVERKL.

11 consecutive transmembrane segments (helical) span residues 6–26 (FSGLLVVWLLSTLFIATLTWF), 37–57 (VFFSLLFLLTFFFGFPLTSVL), 63–83 (VGVAPPEILLQALLSAACFYG), 118–138 (VILMGIALVSVGIFFMHNGFL), 155–175 (GVALKRFFYFFIPAMLVVYFL), 181–201 (AWLFFLVSTVAFGLLTYMIVG), 207–227 (IIIAFAIFLFIGIIRGWISLW), 228–248 (MLAAAGVLGIVGMFWLALKRY), 341–361 (LVVMGGALFIPLGAIVVGLII), 378–398 (YKAAILHSFCFGAIFNMIVLA), and 410–430 (VFFLVVFGASLLVAKLLFWLF).

The protein belongs to the WzyE family. Probably part of a complex composed of WzxE, WzyE and WzzE.

It is found in the cell inner membrane. Its pathway is bacterial outer membrane biogenesis; enterobacterial common antigen biosynthesis. In terms of biological role, probably involved in the polymerization of enterobacterial common antigen (ECA) trisaccharide repeat units. In Salmonella arizonae (strain ATCC BAA-731 / CDC346-86 / RSK2980), this protein is Probable ECA polymerase.